Reading from the N-terminus, the 281-residue chain is Small ribosomal subunit protein uS3 (281 aa).

Residues 38–106 (IRRLLSTGLE…QVQLNILEVK (69 aa)) form the KH type-2 domain. The disordered stretch occupies residues 218-281 (APAGAERARR…VTHEPQIAES (64 aa)). The segment covering 238 to 256 (SGAAGTTVTGTDAGRAVGG) has biased composition (low complexity).

Belongs to the universal ribosomal protein uS3 family. As to quaternary structure, part of the 30S ribosomal subunit. Forms a tight complex with proteins S10 and S14.

Functionally, binds the lower part of the 30S subunit head. Binds mRNA in the 70S ribosome, positioning it for translation. This is Small ribosomal subunit protein uS3 from Mycobacterium leprae (strain Br4923).